We begin with the raw amino-acid sequence, 124 residues long: Small ribosomal subunit protein uS12 (124 aa).

The tract at residues 1 to 32 is disordered; sequence MPTINQLVRKGRRDKTAKVKTAALKGSPQRRG. Position 89 is a 3-methylthioaspartic acid (D89). A disordered region spans residues 104–124; that stretch reads TQGVKGRKQARSRYGAKKEKS. A compositionally biased stretch (basic residues) spans 108 to 118; that stretch reads KGRKQARSRYG.

This sequence belongs to the universal ribosomal protein uS12 family. In terms of assembly, part of the 30S ribosomal subunit. Contacts proteins S8 and S17. May interact with IF1 in the 30S initiation complex.

Functionally, with S4 and S5 plays an important role in translational accuracy. In terms of biological role, interacts with and stabilizes bases of the 16S rRNA that are involved in tRNA selection in the A site and with the mRNA backbone. Located at the interface of the 30S and 50S subunits, it traverses the body of the 30S subunit contacting proteins on the other side and probably holding the rRNA structure together. The combined cluster of proteins S8, S12 and S17 appears to hold together the shoulder and platform of the 30S subunit. In Rhodococcus jostii (strain RHA1), this protein is Small ribosomal subunit protein uS12.